Here is a 426-residue protein sequence, read N- to C-terminus: Histidine--tRNA ligase (426 aa).

This sequence belongs to the class-II aminoacyl-tRNA synthetase family. As to quaternary structure, homodimer.

It localises to the cytoplasm. It carries out the reaction tRNA(His) + L-histidine + ATP = L-histidyl-tRNA(His) + AMP + diphosphate + H(+). The chain is Histidine--tRNA ligase from Geobacillus thermodenitrificans (strain NG80-2).